Here is a 289-residue protein sequence, read N- to C-terminus: Phosphatidylglycerol--prolipoprotein diacylglyceryl transferase (289 aa).

7 helical membrane-spanning segments follow: residues 23–43 (ALHW…WLAV), 61–81 (LLYM…VLFY), 99–119 (GGMS…WFAH), 125–145 (FFQV…AGRL), 199–219 (SQLY…NLFI), 226–246 (GSVS…TEFF), and 259–279 (LFSM…LMMV). Arginine 144 contacts a 1,2-diacyl-sn-glycero-3-phospho-(1'-sn-glycerol).

This sequence belongs to the Lgt family.

It localises to the cell inner membrane. It catalyses the reaction L-cysteinyl-[prolipoprotein] + a 1,2-diacyl-sn-glycero-3-phospho-(1'-sn-glycerol) = an S-1,2-diacyl-sn-glyceryl-L-cysteinyl-[prolipoprotein] + sn-glycerol 1-phosphate + H(+). It participates in protein modification; lipoprotein biosynthesis (diacylglyceryl transfer). Catalyzes the transfer of the diacylglyceryl group from phosphatidylglycerol to the sulfhydryl group of the N-terminal cysteine of a prolipoprotein, the first step in the formation of mature lipoproteins. The polypeptide is Phosphatidylglycerol--prolipoprotein diacylglyceryl transferase (Pectobacterium atrosepticum (strain SCRI 1043 / ATCC BAA-672) (Erwinia carotovora subsp. atroseptica)).